The sequence spans 239 residues: MAVLKSWLSRSVTLLFRYRQCLCVPVVANFKKRCFSELIRPWHKTVTVGFGVTLCAVPIAQKSEPHSLSSEALMRRAVSLVTDSTSTFLSQTTYALIEAITEYTKAVYTLTSLYRQYTSLLGKMNSQEEDEVWQVIIGARAEMTSKHQEYLKLETTWMTAVGLSEMAAEAAYQTGADQAPITARNHIQLVKLQVEEVHQLSRKAETKLAEAQIEELRQKTQEEGEERAESEQEAYLRED.

The transit peptide at 1 to 22 directs the protein to the mitochondrion; the sequence is MAVLKSWLSRSVTLLFRYRQCL. Residues 56-60 carry the IAP-binding motif; it reads AVPIA. The disordered stretch occupies residues 217–239; the sequence is RQKTQEEGEERAESEQEAYLRED.

The protein belongs to the Smac/DIABLO protein family. As to quaternary structure, homodimer. Interacts with BEX3. Interacts with BIRC2/c-IAP1 (via BIR3 domain). Interacts with BIRC6/BRUCE. Interacts with BIRC7/livin. Interacts with XIAP/BIRC4 (via BIR3 domain). Interacts with the monomeric and dimeric form of BIRC5/survivin. Interacts with AREL1 (via HECT domain); in the cytoplasm following induction of apoptosis. In terms of processing, ubiquitinated by BIRC7/livin. Ubiquitinated by BIRC6. Post-translationally, the precursor form is proteolytically cleaved by mitochondrial processing peptidase MPP to remove the transit peptide and produce an intermediate form. This is then processed by PARL to produce the mature cleaved form which is released from mitochondria into the cytosol in apoptotic cells.

It is found in the mitochondrion. The protein localises to the cytoplasm. The protein resides in the cytosol. In terms of biological role, promotes apoptosis by activating caspases in the cytochrome c/Apaf-1/caspase-9 pathway. Acts by opposing the inhibitory activity of inhibitor of apoptosis proteins (IAP). Inhibits the activity of BIRC6/BRUCE by inhibiting its binding to caspases. The polypeptide is Diablo IAP-binding mitochondrial protein (Pongo abelii (Sumatran orangutan)).